Here is a 443-residue protein sequence, read N- to C-terminus: Glycerol-3-phosphate acyltransferase 3-like (443 aa).

The next 3 membrane-spanning stretches (helical) occupy residues 15–35 (WFSC…SLGI), 146–166 (ISLR…CILL), and 170–190 (ITLT…VGFL). An HXXXXD motif motif is present at residues 238-243 (HTSPID). A helical membrane pass occupies residues 358-378 (IMSYLLRMMTSWAIVCNVWYL).

This sequence belongs to the 1-acyl-sn-glycerol-3-phosphate acyltransferase family.

Its subcellular location is the endoplasmic reticulum membrane. The catalysed reaction is sn-glycerol 3-phosphate + an acyl-CoA = a 1-acyl-sn-glycero-3-phosphate + CoA. It catalyses the reaction a 1-acyl-sn-glycero-3-phosphate + an acyl-CoA = a 1,2-diacyl-sn-glycero-3-phosphate + CoA. Its pathway is glycerolipid metabolism; triacylglycerol biosynthesis. It participates in phospholipid metabolism; CDP-diacylglycerol biosynthesis; CDP-diacylglycerol from sn-glycerol 3-phosphate: step 1/3. In terms of biological role, may transfer the acyl-group from acyl-coA to the sn-1 position of glycerol-3-phosphate, an essential step in glycerolipid biosynthesis. Also transfers the acyl-group from acyl-coA to the sn-2 position of 1-acyl-sn-glycerol-3-phosphate (lysophosphatidic acid, or LPA), forming 1,2-diacyl-sn-glycerol-3-phosphate (phosphatidic acid, or PA). The polypeptide is Glycerol-3-phosphate acyltransferase 3-like (agpat9l) (Danio rerio (Zebrafish)).